We begin with the raw amino-acid sequence, 399 residues long: ATP phosphoribosyltransferase regulatory subunit (399 aa).

Belongs to the class-II aminoacyl-tRNA synthetase family. HisZ subfamily. In terms of assembly, heteromultimer composed of HisG and HisZ subunits.

Its subcellular location is the cytoplasm. It participates in amino-acid biosynthesis; L-histidine biosynthesis; L-histidine from 5-phospho-alpha-D-ribose 1-diphosphate: step 1/9. Its function is as follows. Required for the first step of histidine biosynthesis. May allow the feedback regulation of ATP phosphoribosyltransferase activity by histidine. This is ATP phosphoribosyltransferase regulatory subunit from Symbiobacterium thermophilum (strain DSM 24528 / JCM 14929 / IAM 14863 / T).